A 579-amino-acid polypeptide reads, in one-letter code: Fatty-acid amide hydrolase 1 (579 aa).

A helical transmembrane segment spans residues 9–29 (TLSGVSGVCLACSLLSAAVVL). Topologically, residues 30–403 (RWTGRQKARG…GDFVDPCLGD (374 aa)) are cytoplasmic. Lys-142 acts as the Charge relay system in catalysis. Substrate contacts are provided by residues Met-191, Ser-217, and 238–241 (IGGS). Residue Ser-217 is the Charge relay system of the active site. Ser-241 functions as the Acyl-ester intermediate in the catalytic mechanism. Residue Ser-241 is modified to Phosphoserine. The stretch at 404–433 (LILILRLPSWFKRLLSLLLKPLFPRLAAFL) is an intramembrane region. Topologically, residues 434–579 (NSMRPRSAEK…QLMTPQKQPS (146 aa)) are cytoplasmic.

Belongs to the amidase family. As to quaternary structure, homodimer. In terms of tissue distribution, found in neuronal cells throughout the CNS. Expressed in liver and brain, and to a lesser extent in spleen, lung, kidney and testes.

The protein resides in the endoplasmic reticulum membrane. Its subcellular location is the golgi apparatus membrane. The enzyme catalyses N-(5Z,8Z,11Z,14Z-eicosatetraenoyl)-ethanolamine + H2O = ethanolamine + (5Z,8Z,11Z,14Z)-eicosatetraenoate. It catalyses the reaction (9Z)-octadecenamide + H2O = (9Z)-octadecenoate + NH4(+). It carries out the reaction 2-(5Z,8Z,11Z,14Z-eicosatetraenoyl)-glycerol + H2O = glycerol + (5Z,8Z,11Z,14Z)-eicosatetraenoate + H(+). The catalysed reaction is (9Z,12Z,15Z)-octadecatrienamide + H2O = (9Z,12Z,15Z)-octadecatrienoate + NH4(+). The enzyme catalyses (5Z,8Z,11Z,14Z)-eicosatetraenamide + H2O = (5Z,8Z,11Z,14Z)-eicosatetraenoate + NH4(+). It catalyses the reaction (6Z)-octadecenamide + H2O = (6Z)-octadecenoate + NH4(+). It carries out the reaction (15Z)-tetracosenamide + H2O = (15Z)-tetracosenoate + NH4(+). The catalysed reaction is (8Z,11Z,14Z)-eicosatrienamide + H2O = (8Z,11Z,14Z)-eicosatrienoate + NH4(+). The enzyme catalyses (11Z,14Z,17Z)-eicosatrienamide + H2O = (11Z,14Z,17Z)-eicosatrienoate + NH4(+). It catalyses the reaction (11Z,14Z)-eicosadienamide + H2O = (11Z,14Z)-eicosadienoate + NH4(+). It carries out the reaction (9Z,12Z)-octadecadienamide + H2O = (9Z,12Z)-octadecadienoate + NH4(+). The catalysed reaction is tetradecamide + H2O = tetradecanoate + NH4(+). The enzyme catalyses N-(9Z-octadecenoyl) ethanolamine + H2O = ethanolamine + (9Z)-octadecenoate. It catalyses the reaction N-(9Z-octadecenoyl)-taurine + H2O = taurine + (9Z)-octadecenoate. It carries out the reaction 1-O-methyl-(5Z,8Z,11Z,14Z)-eicosatetraenoate + H2O = methanol + (5Z,8Z,11Z,14Z)-eicosatetraenoate + H(+). The catalysed reaction is (11Z)-eicosenamide + H2O = (11Z)-eicosenoate + NH4(+). The enzyme catalyses N-(9Z-hexadecenoyl) ethanolamine + H2O = (9Z)-hexadecenoate + ethanolamine. It catalyses the reaction N-octadecanoyl ethanolamine + H2O = octadecanoate + ethanolamine. It carries out the reaction N-docosanoyl-ethanolamine + H2O = docosanoate + ethanolamine. The catalysed reaction is N-tetracosanoyl-taurine + H2O = tetracosanoate + taurine. The enzyme catalyses N-(15Z-tetracosenoyl)-ethanolamine + H2O = (15Z)-tetracosenoate + ethanolamine. It catalyses the reaction N-docosanoyl-taurine + H2O = docosanoate + taurine. It carries out the reaction N-(15Z-tetracosenoyl)-taurine + H2O = (15Z)-tetracosenoate + taurine. The catalysed reaction is N-tricosanoyl-taurine + H2O = tricosanoate + taurine. The enzyme catalyses (9Z)-octadecenoate + glycine = N-(9Z-octadecenoyl)glycine + H2O. It catalyses the reaction N-(5Z,8Z,11Z,14Z)-eicosatetraenoyl-glycine + H2O = (5Z,8Z,11Z,14Z)-eicosatetraenoate + glycine. It carries out the reaction N-(5Z,8Z,11Z,14Z-eicosatetraenoyl)-L-serine + H2O = (5Z,8Z,11Z,14Z)-eicosatetraenoate + L-serine. With respect to regulation, inhibited by trifluoromethyl ketone. Functionally, catalyzes the hydrolysis of endogenous amidated lipids like the sleep-inducing lipid oleamide ((9Z)-octadecenamide), the endocannabinoid anandamide (N-(5Z,8Z,11Z,14Z-eicosatetraenoyl)-ethanolamine), as well as other fatty amides, to their corresponding fatty acids, thereby regulating the signaling functions of these molecules. Hydrolyzes polyunsaturated substrate anandamide preferentially as compared to monounsaturated substrates. It can also catalyze the hydrolysis of the endocannabinoid 2-arachidonoylglycerol (2-(5Z,8Z,11Z,14Z-eicosatetraenoyl)-glycerol). FAAH cooperates with PM20D1 in the hydrolysis of amino acid-conjugated fatty acids such as N-fatty acyl glycine and N-fatty acyl-L-serine, thereby acting as a physiological regulator of specific subsets of intracellular, but not of extracellular, N-fatty acyl amino acids. The polypeptide is Fatty-acid amide hydrolase 1 (Faah) (Rattus norvegicus (Rat)).